The primary structure comprises 1160 residues: ATP-dependent helicase/deoxyribonuclease subunit B (1160 aa).

This sequence belongs to the helicase family. AddB/RexB type 2 subfamily. Heterodimer of AddA and RexB. The cofactor is Mg(2+).

In terms of biological role, the heterodimer acts as both an ATP-dependent DNA helicase and an ATP-dependent, dual-direction single-stranded exonuclease. Recognizes the chi site generating a DNA molecule suitable for the initiation of homologous recombination. This subunit has 5' -&gt; 3' nuclease activity but not helicase activity. This is ATP-dependent helicase/deoxyribonuclease subunit B from Lactobacillus helveticus (strain DPC 4571).